A 223-amino-acid polypeptide reads, in one-letter code: Ribosomal RNA small subunit methyltransferase G (223 aa).

S-adenosyl-L-methionine is bound by residues glycine 84, leucine 89, valine 135–glutamate 136, and arginine 150.

The protein belongs to the methyltransferase superfamily. RNA methyltransferase RsmG family.

Its subcellular location is the cytoplasm. The catalysed reaction is guanosine(527) in 16S rRNA + S-adenosyl-L-methionine = N(7)-methylguanosine(527) in 16S rRNA + S-adenosyl-L-homocysteine. Specifically methylates the N7 position of guanine in position 527 of 16S rRNA. This is Ribosomal RNA small subunit methyltransferase G from Saccharophagus degradans (strain 2-40 / ATCC 43961 / DSM 17024).